The chain runs to 243 residues: Adenylate dimethylallyltransferase (243 aa).

This sequence belongs to the isopentenyl transferase family.

The enzyme catalyses dimethylallyl diphosphate + AMP = N(6)-(dimethylallyl)adenosine 5'-phosphate + diphosphate. Its function is as follows. Transfers dimethylallyl groups to AMP as part of the biosynthesis of cytokinin phytohormones. The protein is Adenylate dimethylallyltransferase (tzs) of Rhizobium rhizogenes (Agrobacterium rhizogenes).